The following is a 141-amino-acid chain: MLMPKRTKFRKQMKGRNRGYATRGASLSTGEFALKAVEAGRVNSRQIEAARQALTRHVKRQAKIWIRVFPDKPLTKKPLQTRMGKGKAGVEEWVMNIKPGRILFEMAGVSEELAREALTLAMHKLPFKSKFVTRESENEIY.

The span at 1 to 17 (MLMPKRTKFRKQMKGRN) shows a compositional bias: basic residues. The interval 1–22 (MLMPKRTKFRKQMKGRNRGYAT) is disordered.

The protein belongs to the universal ribosomal protein uL16 family. Part of the 50S ribosomal subunit.

Its function is as follows. Binds 23S rRNA and is also seen to make contacts with the A and possibly P site tRNAs. The sequence is that of Large ribosomal subunit protein uL16 from Campylobacter curvus (strain 525.92).